The following is an 835-amino-acid chain: Ion-translocating oxidoreductase complex subunit C (835 aa).

2 4Fe-4S ferredoxin-type domains span residues 368–397 and 407–436; these read YAPPAPEQSCIRCSACSDACPVSLMPQQLY and KSEEYALKDCIECGLCAYVCPSHIPLIQYF. 8 residues coordinate [4Fe-4S] cluster: cysteine 377, cysteine 380, cysteine 383, cysteine 387, cysteine 416, cysteine 419, cysteine 422, and cysteine 426. A compositionally biased stretch (basic and acidic residues) spans 468 to 489; sequence AREEQERKARAQKAMEARRQEM. Disordered stretches follow at residues 468 to 492, 540 to 574, 586 to 618, 634 to 666, 682 to 714, 730 to 762, and 778 to 811; these read AREEQERKARAQKAMEARRQEMKTA, QRKARRLARQQQTQNTDVSQVETNEENKSTDSKSA, KAAQQGSALEKDEISSSDTLSVGNDTEPVAEDP, KAAQQGSAVEKDEISSSNTLSVGNDTEPVADDP, KAAQQGSAVEQDEISSSDTLSIGNEAEPVADDP, KAAQQRSAVEQDEISSSDTLSVGNETESVAEDP, and KAAQQRSAVEQDEISSSDTLSVGNETESVAEDPR. Residues 552-561 show a composition bias toward polar residues; sequence TQNTDVSQVE. Residues 648-657 show a composition bias toward polar residues; sequence SSSNTLSVGN. Polar residues-rich tracts occupy residues 745 to 756 and 793 to 804; these read SSDTLSVGNETE.

The protein belongs to the 4Fe4S bacterial-type ferredoxin family. RnfC subfamily. In terms of assembly, the complex is composed of six subunits: RnfA, RnfB, RnfC, RnfD, RnfE and RnfG. Requires [4Fe-4S] cluster as cofactor.

The protein resides in the cell inner membrane. Part of a membrane-bound complex that couples electron transfer with translocation of ions across the membrane. The sequence is that of Ion-translocating oxidoreductase complex subunit C from Pasteurella multocida (strain Pm70).